Here is a 423-residue protein sequence, read N- to C-terminus: Glutamate-1-semialdehyde 2,1-aminomutase (423 aa).

An N6-(pyridoxal phosphate)lysine modification is found at lysine 259.

It belongs to the class-III pyridoxal-phosphate-dependent aminotransferase family. HemL subfamily. As to quaternary structure, homodimer. It depends on pyridoxal 5'-phosphate as a cofactor.

The protein localises to the cytoplasm. It carries out the reaction (S)-4-amino-5-oxopentanoate = 5-aminolevulinate. It functions in the pathway porphyrin-containing compound metabolism; protoporphyrin-IX biosynthesis; 5-aminolevulinate from L-glutamyl-tRNA(Glu): step 2/2. The sequence is that of Glutamate-1-semialdehyde 2,1-aminomutase from Thermosipho africanus (strain TCF52B).